Reading from the N-terminus, the 316-residue chain is Homoserine O-succinyltransferase (316 aa).

The Acyl-thioester intermediate role is filled by Cys142. Substrate is bound by residues Lys163 and Ser192. The active-site Proton acceptor is His235. Residue Glu237 is part of the active site. Arg249 serves as a coordination point for substrate.

The protein belongs to the MetA family.

It localises to the cytoplasm. It catalyses the reaction L-homoserine + succinyl-CoA = O-succinyl-L-homoserine + CoA. It functions in the pathway amino-acid biosynthesis; L-methionine biosynthesis via de novo pathway; O-succinyl-L-homoserine from L-homoserine: step 1/1. Transfers a succinyl group from succinyl-CoA to L-homoserine, forming succinyl-L-homoserine. This chain is Homoserine O-succinyltransferase, found in Shewanella amazonensis (strain ATCC BAA-1098 / SB2B).